The chain runs to 955 residues: HAUS augmin-like complex subunit 6 (955 aa).

A coiled-coil region spans residues glutamine 188–glutamate 219. Serine 406 carries the phosphoserine modification. The segment at asparagine 474–isoleucine 495 is disordered. The segment covering leucine 479 to isoleucine 495 has biased composition (basic and acidic residues). 5 positions are modified to phosphoserine: serine 507, serine 524, serine 530, serine 550, and serine 552. A Phosphothreonine modification is found at threonine 584. Phosphoserine is present on residues serine 715, serine 728, serine 742, and serine 805. The disordered stretch occupies residues phenylalanine 789–glutamate 814. The residue at position 823 (threonine 823) is a Phosphothreonine. The interval arginine 848–aspartate 876 is disordered. Phosphoserine occurs at positions 908, 914, and 943.

Belongs to the HAUS6 family. As to quaternary structure, component of the HAUS augmin-like complex. The complex interacts with the gamma-tubulin ring complex and this interaction is required for spindle assembly. Interacts with PLK1, NEDD1 and gamma-tubulin. Interacts with EML3 (phosphorylated at 'Thr-881'). Post-translationally, phosphorylated during mitosis.

The protein localises to the cytoplasm. It localises to the cytoskeleton. It is found in the spindle. Its subcellular location is the microtubule organizing center. The protein resides in the centrosome. Functionally, contributes to mitotic spindle assembly, maintenance of centrosome integrity and completion of cytokinesis as part of the HAUS augmin-like complex. Promotes the nucleation of microtubules from the spindle through recruitment of NEDD1 and gamma-tubulin. The chain is HAUS augmin-like complex subunit 6 (HAUS6) from Homo sapiens (Human).